The sequence spans 222 residues: uncharacterized protein (222 aa).

An HTH gntR-type domain is found at 8–77 (AKKNQIIYRY…NTPGYFVCKD (70 aa)).

This is an uncharacterized protein from Mycoplasma genitalium (strain ATCC 33530 / DSM 19775 / NCTC 10195 / G37) (Mycoplasmoides genitalium).